The primary structure comprises 116 residues: G antigen 10 (116 aa).

A disordered region spans residues Met1 to Cys116. Residues Phe31–Glu44 are compositionally biased toward acidic residues. 2 stretches are compositionally biased toward basic and acidic residues: residues Pro71 to His80 and Glu102 to Cys116.

This sequence belongs to the GAGE family.

The polypeptide is G antigen 10 (GAGE10) (Homo sapiens (Human)).